The primary structure comprises 179 residues: NAD(P)H-quinone oxidoreductase subunit I, chloroplastic (179 aa).

4Fe-4S ferredoxin-type domains are found at residues 55-84 (GRIH…VDWR) and 95-124 (LNYS…MTEE). Cys64, Cys67, Cys70, Cys74, Cys104, Cys107, Cys110, and Cys114 together coordinate [4Fe-4S] cluster.

This sequence belongs to the complex I 23 kDa subunit family. As to quaternary structure, NDH is composed of at least 16 different subunits, 5 of which are encoded in the nucleus. Requires [4Fe-4S] cluster as cofactor.

Its subcellular location is the plastid. The protein resides in the chloroplast thylakoid membrane. It carries out the reaction a plastoquinone + NADH + (n+1) H(+)(in) = a plastoquinol + NAD(+) + n H(+)(out). The enzyme catalyses a plastoquinone + NADPH + (n+1) H(+)(in) = a plastoquinol + NADP(+) + n H(+)(out). Functionally, NDH shuttles electrons from NAD(P)H:plastoquinone, via FMN and iron-sulfur (Fe-S) centers, to quinones in the photosynthetic chain and possibly in a chloroplast respiratory chain. The immediate electron acceptor for the enzyme in this species is believed to be plastoquinone. Couples the redox reaction to proton translocation, and thus conserves the redox energy in a proton gradient. The polypeptide is NAD(P)H-quinone oxidoreductase subunit I, chloroplastic (Acorus calamus (Sweet flag)).